A 284-amino-acid chain; its full sequence is L-ribulose-5-phosphate 3-epimerase UlaE (284 aa).

The protein belongs to the L-ribulose-5-phosphate 3-epimerase family.

It catalyses the reaction L-ribulose 5-phosphate = L-xylulose 5-phosphate. Its pathway is cofactor degradation; L-ascorbate degradation; D-xylulose 5-phosphate from L-ascorbate: step 3/4. Its function is as follows. Catalyzes the isomerization of L-xylulose-5-phosphate to L-ribulose-5-phosphate. Is involved in the anaerobic L-ascorbate utilization. The polypeptide is L-ribulose-5-phosphate 3-epimerase UlaE (Salmonella typhimurium (strain LT2 / SGSC1412 / ATCC 700720)).